Reading from the N-terminus, the 601-residue chain is Putative pentatricopeptide repeat-containing protein At3g25060, mitochondrial (601 aa).

The transit peptide at 1 to 80 (MVQTKHFCML…KVFDELPQRG (80 aa)) directs the protein to the mitochondrion. PPR repeat units follow at residues 49-79 (GSSI…LPQR), 80-114 (GVSV…KIQP), 115-149 (DSST…GYKN), 150-180 (DVFV…MAKR), 181-215 (DVIC…GFGR), 216-250 (DRVV…GLPM), 251-281 (NVVV…MMFK), 282-316 (TAVS…GFQP), 317-347 (DLVT…ILKR), 351-381 (DRVT…VGRK), 382-416 (DLVC…NIEP), 417-452 (DHAT…KIQP), and 453-487 (SEKH…NALP). The type E motif stretch occupies residues 488-563 (IWVALLSGCI…VPGYSAIEVN (76 aa)). Residues 564–594 (GELRTFLMEDLSHHEHYHMLQVLRNLKTEIR) are type E(+) motif.

This sequence belongs to the PPR family. PCMP-E subfamily.

The protein localises to the mitochondrion. The sequence is that of Putative pentatricopeptide repeat-containing protein At3g25060, mitochondrial (PCMP-E96) from Arabidopsis thaliana (Mouse-ear cress).